A 301-amino-acid polypeptide reads, in one-letter code: uncharacterized protein (301 aa).

It belongs to the asfivirus E301R family. In terms of assembly, interacts with host IRF3.

Its function is as follows. Plays a role in the inhibition of host innate immune system by acting as a negatively regulator of type I interferon production. Mechanistically, interacts with and prevents host IRF3 nuclear localization to inhibit its transcriptional activity. This is an uncharacterized protein from African swine fever virus (isolate Tick/South Africa/Pretoriuskop Pr4/1996) (ASFV).